The chain runs to 302 residues: Sodium/potassium-transporting ATPase subunit beta-233 (302 aa).

At 1 to 30 (MSGNKDSDGGWKTFIWNSEKKELLGRTGCS) the chain is on the cytoplasmic side. Residues 31–51 (WFKILLFYVIFYGCLAAVFVG) traverse the membrane as a helical; Signal-anchor for type II membrane protein segment. Topologically, residues 52–302 (TIQALLLTLS…FDIKITVNDS (251 aa)) are extracellular. 2 disulfide bridges follow: Cys125–Cys148 and Cys158–Cys174. Asn193 and Asn263 each carry an N-linked (GlcNAc...) asparagine glycan. A disulfide bridge connects residues Cys213 and Cys274.

This sequence belongs to the X(+)/potassium ATPases subunit beta family. In terms of assembly, the sodium/potassium-transporting ATPase is composed of a catalytic alpha subunit, an auxiliary non-catalytic beta subunit and an additional regulatory subunit. In terms of processing, glycosylated. In terms of tissue distribution, expressed mainly in epithelial tissues.

Its subcellular location is the cell membrane. Its function is as follows. This is the non-catalytic component of the active enzyme, which catalyzes the hydrolysis of ATP coupled with the exchange of Na(+) and K(+) ions across the plasma membrane. The beta subunit regulates, through assembly of alpha/beta heterodimers, the number of sodium pumps transported to the plasma membrane. The sequence is that of Sodium/potassium-transporting ATPase subunit beta-233 from Anguilla anguilla (European freshwater eel).